A 432-amino-acid chain; its full sequence is Methylenetetrahydrofolate--tRNA-(uracil-5-)-methyltransferase TrmFO (432 aa).

Position 7-12 (7-12 (GAGLAG)) interacts with FAD.

The protein belongs to the MnmG family. TrmFO subfamily. Requires FAD as cofactor.

It is found in the cytoplasm. The enzyme catalyses uridine(54) in tRNA + (6R)-5,10-methylene-5,6,7,8-tetrahydrofolate + NADH + H(+) = 5-methyluridine(54) in tRNA + (6S)-5,6,7,8-tetrahydrofolate + NAD(+). The catalysed reaction is uridine(54) in tRNA + (6R)-5,10-methylene-5,6,7,8-tetrahydrofolate + NADPH + H(+) = 5-methyluridine(54) in tRNA + (6S)-5,6,7,8-tetrahydrofolate + NADP(+). Its function is as follows. Catalyzes the folate-dependent formation of 5-methyl-uridine at position 54 (M-5-U54) in all tRNAs. This chain is Methylenetetrahydrofolate--tRNA-(uracil-5-)-methyltransferase TrmFO, found in Anoxybacillus flavithermus (strain DSM 21510 / WK1).